We begin with the raw amino-acid sequence, 617 residues long: Dihydroxy-acid dehydratase (617 aa).

D81 is a Mg(2+) binding site. C122 lines the [2Fe-2S] cluster pocket. 2 residues coordinate Mg(2+): D123 and K124. N6-carboxylysine is present on K124. C195 provides a ligand contact to [2Fe-2S] cluster. A Mg(2+)-binding site is contributed by E492. S518 acts as the Proton acceptor in catalysis.

This sequence belongs to the IlvD/Edd family. As to quaternary structure, homodimer. [2Fe-2S] cluster is required as a cofactor. The cofactor is Mg(2+).

The catalysed reaction is (2R)-2,3-dihydroxy-3-methylbutanoate = 3-methyl-2-oxobutanoate + H2O. The enzyme catalyses (2R,3R)-2,3-dihydroxy-3-methylpentanoate = (S)-3-methyl-2-oxopentanoate + H2O. Its pathway is amino-acid biosynthesis; L-isoleucine biosynthesis; L-isoleucine from 2-oxobutanoate: step 3/4. The protein operates within amino-acid biosynthesis; L-valine biosynthesis; L-valine from pyruvate: step 3/4. Functions in the biosynthesis of branched-chain amino acids. Catalyzes the dehydration of (2R,3R)-2,3-dihydroxy-3-methylpentanoate (2,3-dihydroxy-3-methylvalerate) into 2-oxo-3-methylpentanoate (2-oxo-3-methylvalerate) and of (2R)-2,3-dihydroxy-3-methylbutanoate (2,3-dihydroxyisovalerate) into 2-oxo-3-methylbutanoate (2-oxoisovalerate), the penultimate precursor to L-isoleucine and L-valine, respectively. In Buchnera aphidicola subsp. Cinara cedri (strain Cc), this protein is Dihydroxy-acid dehydratase.